The chain runs to 531 residues: T-complex protein 1 subunit zeta (531 aa).

Ala-2 is subject to N-acetylalanine. At Lys-5 the chain carries N6-acetyllysine. An ADP-binding site is contributed by Gly-39. Residue Gly-39 participates in ATP binding. Asp-90 lines the Mg(2+) pocket. The ADP site is built by Gly-91, Thr-92, Thr-93, Ser-94, Thr-158, and Lys-159. The ATP site is built by Gly-91, Thr-92, and Thr-93. Residue Lys-199 is modified to N6-acetyllysine. The residue at position 205 (Ser-205) is a Phosphoserine. Lys-251 is covalently cross-linked (Glycyl lysine isopeptide (Lys-Gly) (interchain with G-Cter in SUMO2)). N6-acetyllysine occurs at positions 287, 365, 377, and 388. An ADP-binding site is contributed by Ala-411. 4 residues coordinate ATP: Ala-411, Gly-412, Asp-496, and Lys-501. Asp-496 serves as a coordination point for ADP.

This sequence belongs to the TCP-1 chaperonin family. Component of the chaperonin-containing T-complex (TRiC), a hexadecamer composed of two identical back-to-back stacked rings enclosing a protein folding chamber. Each ring is made up of eight different subunits: TCP1/CCT1, CCT2, CCT3, CCT4, CCT5, CCT6A/CCT6, CCT7, CCT8. Interacts with PACRG.

It localises to the cytoplasm. It catalyses the reaction ATP + H2O = ADP + phosphate + H(+). In terms of biological role, component of the chaperonin-containing T-complex (TRiC), a molecular chaperone complex that assists the folding of actin, tubulin and other proteins upon ATP hydrolysis. The TRiC complex mediates the folding of WRAP53/TCAB1, thereby regulating telomere maintenance. The protein is T-complex protein 1 subunit zeta (CCT6) of Pongo abelii (Sumatran orangutan).